The chain runs to 81 residues: Photosystem I iron-sulfur center (81 aa).

4Fe-4S ferredoxin-type domains are found at residues 2–31 (SHSV…MVPW) and 37–68 (GQIA…VRVY). Residues C11, C14, C17, C21, C48, C51, C54, and C58 each coordinate [4Fe-4S] cluster.

The eukaryotic PSI reaction center is composed of at least 11 subunits. Requires [4Fe-4S] cluster as cofactor.

Its subcellular location is the plastid. The protein resides in the chloroplast thylakoid membrane. It catalyses the reaction reduced [plastocyanin] + hnu + oxidized [2Fe-2S]-[ferredoxin] = oxidized [plastocyanin] + reduced [2Fe-2S]-[ferredoxin]. In terms of biological role, apoprotein for the two 4Fe-4S centers FA and FB of photosystem I (PSI); essential for photochemical activity. FB is the terminal electron acceptor of PSI, donating electrons to ferredoxin. The C-terminus interacts with PsaA/B/D and helps assemble the protein into the PSI complex. Required for binding of PsaD and PsaE to PSI. PSI is a plastocyanin/cytochrome c6-ferredoxin oxidoreductase, converting photonic excitation into a charge separation, which transfers an electron from the donor P700 chlorophyll pair to the spectroscopically characterized acceptors A0, A1, FX, FA and FB in turn. The polypeptide is Photosystem I iron-sulfur center (Euglena gracilis).